The chain runs to 331 residues: Ferredoxin--NADP reductase 2 (331 aa).

7 residues coordinate FAD: Glu-37, Gln-45, Tyr-50, Val-90, Phe-124, Asp-286, and Thr-327.

The protein belongs to the ferredoxin--NADP reductase type 2 family. Homodimer. The cofactor is FAD.

It catalyses the reaction 2 reduced [2Fe-2S]-[ferredoxin] + NADP(+) + H(+) = 2 oxidized [2Fe-2S]-[ferredoxin] + NADPH. This is Ferredoxin--NADP reductase 2 from Listeria monocytogenes serovar 1/2a (strain ATCC BAA-679 / EGD-e).